The chain runs to 165 residues: Large ribosomal subunit protein uL5 (165 aa).

This sequence belongs to the universal ribosomal protein uL5 family. Part of the 50S ribosomal subunit; contacts the 5S rRNA and probably tRNA. Forms a bridge to the 30S subunit in the 70S ribosome.

Its function is as follows. This is one of the proteins that bind and probably mediate the attachment of the 5S RNA into the large ribosomal subunit, where it forms part of the central protuberance. In the 70S ribosome it contacts protein S13 of the 30S subunit (bridge B1b), connecting the 2 subunits; this bridge is implicated in subunit movement. May contact the P site tRNA; the 5S rRNA and some of its associated proteins might help stabilize positioning of ribosome-bound tRNAs. This chain is Large ribosomal subunit protein uL5, found in Methanoregula boonei (strain DSM 21154 / JCM 14090 / 6A8).